A 562-amino-acid chain; its full sequence is Apical membrane antigen 1 (562 aa).

The N-terminal stretch at 1–21 (MNKIYCILFLSAQCLVHMGKC) is a signal peptide. At 22–484 (EPNQKPSRLT…QYAQGESKNQ (463 aa)) the chain is on the extracellular side. N84 and N176 each carry an N-linked (GlcNAc...) asparagine glycan. Intrachain disulfides connect C94–C247, C162–C192, C208–C220, C265–C363, C282–C354, C388–C444, C432–C449, and C434–C451. N226 is a glycosylation site (N-linked (GlcNAc...) asparagine). N405 and N441 each carry an N-linked (GlcNAc...) asparagine glycan. Residues 485 to 507 (MLLIIIGITGGVCVVALASMFYF) traverse the membrane as a helical segment. Residues 508–562 (RKKAHNDKYDKMEQADGYGKPTTRKDEMLDPEASFWGEEKRASHTTPVLMEKPYY) are Cytoplasmic-facing. Residues 519–543 (MEQADGYGKPTTRKDEMLDPEASFW) form a disordered region.

Belongs to the apicomplexan parasites AMA1 family.

It is found in the membrane. Its function is as follows. Involved in parasite invasion of erythrocytes. The sequence is that of Apical membrane antigen 1 (AMA-1) from Plasmodium fragile.